The primary structure comprises 284 residues: Ribosomal RNA small subunit methyltransferase A (284 aa).

S-adenosyl-L-methionine is bound by residues Asn27, Leu29, Gly54, Glu75, Asp100, and Asn125.

This sequence belongs to the class I-like SAM-binding methyltransferase superfamily. rRNA adenine N(6)-methyltransferase family. RsmA subfamily.

It is found in the cytoplasm. It catalyses the reaction adenosine(1518)/adenosine(1519) in 16S rRNA + 4 S-adenosyl-L-methionine = N(6)-dimethyladenosine(1518)/N(6)-dimethyladenosine(1519) in 16S rRNA + 4 S-adenosyl-L-homocysteine + 4 H(+). Its function is as follows. Specifically dimethylates two adjacent adenosines (A1518 and A1519) in the loop of a conserved hairpin near the 3'-end of 16S rRNA in the 30S particle. May play a critical role in biogenesis of 30S subunits. The chain is Ribosomal RNA small subunit methyltransferase A from Protochlamydia amoebophila (strain UWE25).